Consider the following 450-residue polypeptide: Proline--tRNA ligase (450 aa).

It belongs to the class-II aminoacyl-tRNA synthetase family. ProS type 2 subfamily. As to quaternary structure, homodimer.

The protein resides in the cytoplasm. It carries out the reaction tRNA(Pro) + L-proline + ATP = L-prolyl-tRNA(Pro) + AMP + diphosphate. In terms of biological role, catalyzes the attachment of proline to tRNA(Pro) in a two-step reaction: proline is first activated by ATP to form Pro-AMP and then transferred to the acceptor end of tRNA(Pro). This Paracoccus denitrificans (strain Pd 1222) protein is Proline--tRNA ligase.